Here is a 373-residue protein sequence, read N- to C-terminus: Probable cysteine protease RD19C (373 aa).

The first 20 residues, 1 to 20, serve as a signal peptide directing secretion; that stretch reads MDRVVFFFLIAATLLAGSLG. Residues 21-139 constitute a propeptide, activation peptide; the sequence is STVISGEVTD…QTAPILPTSD (119 aa). 2 cysteine pairs are disulfide-bonded: Cys161–Cys211 and Cys195–Cys245. Residue Cys164 is part of the active site. The N-linked (GlcNAc...) asparagine glycan is linked to Asn258. Cys301 and Cys356 are oxidised to a cystine. Catalysis depends on residues His307 and Asn334.

Belongs to the peptidase C1 family.

The protein resides in the lytic vacuole. Functionally, probable thiol protease. This chain is Probable cysteine protease RD19C, found in Arabidopsis thaliana (Mouse-ear cress).